A 337-amino-acid polypeptide reads, in one-letter code: Palmitoyltransferase ZDHHC15 (337 aa).

Residues 1–20 (MRRGWKMALSGGLRCCRRVL) are Cytoplasmic-facing. Residues 21–41 (SWVPVLVIVLVVLWSYYAYVF) form a helical membrane-spanning segment. Residues 42-56 (ELCLVTVLSPAEKVI) lie on the Lumenal side of the membrane. A helical membrane pass occupies residues 57–77 (YLILYHAIFVFFAWTYWKSIF). Topologically, residues 78–172 (TLPQQPNQKF…NNCIGFSNYK (95 aa)) are cytoplasmic. The 51-residue stretch at 129 to 179 (RFCDRCHLIKPDRCHHCSVCAMCVLKMDHHCPWVNNCIGFSNYKFFLQFLA) folds into the DHHC domain. The Zn(2+) site is built by Cys131, Cys134, His144, Cys145, Cys148, Cys151, and His158. The active-site S-palmitoyl cysteine intermediate is the Cys159. Cys165 lines the Zn(2+) pocket. The helical transmembrane segment at 173-193 (FFLQFLAYSVLYCLYIATTVF) threads the bilayer. At 194–210 (SYFIKYWRGELPSVRSK) the chain is on the lumenal side. The helical transmembrane segment at 211–234 (FHVLFLLFVACMFFVSLVILFGYH) threads the bilayer. Topologically, residues 235-337 (CWLVSRNKTT…LSSLAVESET (103 aa)) are cytoplasmic. The tract at residues 293-337 (HSFPMRSMNESQNPLLANEEPWEDNEDESQDYPEGLSSLAVESET) is disordered. Residues 312–323 (EPWEDNEDESQD) show a composition bias toward acidic residues.

The protein belongs to the DHHC palmitoyltransferase family. In terms of processing, autopalmitoylated (in vitro). In brain, expressed in both excitatory and inhibitory neurons but not expressed by glial cells.

The protein localises to the golgi apparatus membrane. The protein resides in the postsynaptic density. The enzyme catalyses L-cysteinyl-[protein] + hexadecanoyl-CoA = S-hexadecanoyl-L-cysteinyl-[protein] + CoA. The catalysed reaction is L-cysteinyl-[protein] + tetradecanoyl-CoA = S-tetradecanoyl-L-cysteinyl-[protein] + CoA. It carries out the reaction L-cysteinyl-[protein] + octadecanoyl-CoA = S-octadecanoyl-L-cysteinyl-[protein] + CoA. In terms of biological role, palmitoyltransferase that catalyzes the addition of palmitate onto various protein substrates. Has no stringent fatty acid selectivity and in addition to palmitate can also transfer onto target proteins myristate from tetradecanoyl-CoA and stearate from octadecanoyl-CoA. Palmitoylates IGF2R and SORT1, promoting their partitioning to an endosomal membrane subdomain where they can interact with the retromer cargo-selective complex. Thereby, regulates retrograde transport from endosomes to the Golgi apparatus of these lysosomal sorting receptors and plays a role in trafficking of lysosomal proteins. In the nervous system, catalyzes the palmitoylation of DLG4/PSD95 and regulates its synaptic clustering and function in synaptogenesis. Could be involved in the differentiation of dopaminergic neurons and the development of the diencephalon. Could also catalyze the palmitoylation of GAP43. Could also palmitoylate DNAJC5 and regulate its localization to the Golgi membrane. Could also palmitoylate FYN as shown in vitro. May palmitoylate CALHM3 subunit of gustatory voltage-gated ion channels and modulate channel gating and kinetics. The sequence is that of Palmitoyltransferase ZDHHC15 from Rattus norvegicus (Rat).